Reading from the N-terminus, the 127-residue chain is Phosphoribosyl-AMP cyclohydrolase (127 aa).

Asp-96 serves as a coordination point for Mg(2+). Cys-97 lines the Zn(2+) pocket. Mg(2+)-binding residues include Asp-98 and Asp-100. Cys-113 and Cys-120 together coordinate Zn(2+).

This sequence belongs to the PRA-CH family. As to quaternary structure, homodimer. Requires Mg(2+) as cofactor. The cofactor is Zn(2+).

It is found in the cytoplasm. The catalysed reaction is 1-(5-phospho-beta-D-ribosyl)-5'-AMP + H2O = 1-(5-phospho-beta-D-ribosyl)-5-[(5-phospho-beta-D-ribosylamino)methylideneamino]imidazole-4-carboxamide. It participates in amino-acid biosynthesis; L-histidine biosynthesis; L-histidine from 5-phospho-alpha-D-ribose 1-diphosphate: step 3/9. Its function is as follows. Catalyzes the hydrolysis of the adenine ring of phosphoribosyl-AMP. The sequence is that of Phosphoribosyl-AMP cyclohydrolase from Corynebacterium jeikeium (strain K411).